Reading from the N-terminus, the 51-residue chain is Large ribosomal subunit protein bL33 (51 aa).

The disordered stretch occupies residues 1–23; it reads MREKIKLESSAGTGHFYTTTKNK. Polar residues predominate over residues 10-20; that stretch reads SAGTGHFYTTT.

The protein belongs to the bacterial ribosomal protein bL33 family.

The sequence is that of Large ribosomal subunit protein bL33 from Methylobacillus flagellatus (strain ATCC 51484 / DSM 6875 / VKM B-1610 / KT).